Reading from the N-terminus, the 898-residue chain is Translation initiation factor IF-2 (898 aa).

A disordered region spans residues 51 to 302 (KEHGDATGSE…RKGRINKPMS (252 aa)). Composition is skewed to basic and acidic residues over residues 100 to 164 (SSVE…KRET) and 171 to 230 (RSDE…KETV). The span at 234–245 (QENTDYHVTTSR) shows a compositional bias: polar residues. Basic residues predominate over residues 263-273 (RRSTKANKRKM). The segment covering 274–286 (SSRDDNQERDSRP) has biased composition (basic and acidic residues). Residues 287-297 (RGGKAGRKGRI) are compositionally biased toward basic residues. The tr-type G domain maps to 397–566 (SRAPVVTIMG…LLQAEVLELK (170 aa)). The interval 406–413 (GHVDHGKT) is G1. 406-413 (GHVDHGKT) is a GTP binding site. The interval 431–435 (GITQH) is G2. Residues 452–455 (DTPG) are G3. Residues 452–456 (DTPGH) and 506–509 (NKID) contribute to the GTP site. The segment at 506 to 509 (NKID) is G4. Positions 542–544 (SAK) are G5.

It belongs to the TRAFAC class translation factor GTPase superfamily. Classic translation factor GTPase family. IF-2 subfamily.

The protein localises to the cytoplasm. Functionally, one of the essential components for the initiation of protein synthesis. Protects formylmethionyl-tRNA from spontaneous hydrolysis and promotes its binding to the 30S ribosomal subunits. Also involved in the hydrolysis of GTP during the formation of the 70S ribosomal complex. This Vibrio cholerae serotype O1 (strain ATCC 39541 / Classical Ogawa 395 / O395) protein is Translation initiation factor IF-2.